We begin with the raw amino-acid sequence, 718 residues long: Polyribonucleotide nucleotidyltransferase (718 aa).

Mg(2+) is bound by residues D487 and D493. One can recognise a KH domain in the interval 554 to 613; the sequence is PRIETFKIPTDKIREVIGTGGKVIREIVEKTGAKVNIEDDGTVKVASSDGESIKAAIKWI. Positions 623 to 691 constitute an S1 motif domain; sequence GEIYEGTVVK…DRGKTRLSMR (69 aa). Residues 694–718 are disordered; it reads DQETGEDLEAKQKAEGEAPAQATGE.

It belongs to the polyribonucleotide nucleotidyltransferase family. Mg(2+) serves as cofactor.

It is found in the cytoplasm. The catalysed reaction is RNA(n+1) + phosphate = RNA(n) + a ribonucleoside 5'-diphosphate. Its function is as follows. Involved in mRNA degradation. Catalyzes the phosphorolysis of single-stranded polyribonucleotides processively in the 3'- to 5'-direction. The chain is Polyribonucleotide nucleotidyltransferase from Rhodopseudomonas palustris (strain HaA2).